We begin with the raw amino-acid sequence, 186 residues long: Probable chorismate pyruvate-lyase (186 aa).

3 residues coordinate substrate: R78, L116, and E175.

The protein belongs to the UbiC family.

The protein resides in the cytoplasm. It carries out the reaction chorismate = 4-hydroxybenzoate + pyruvate. Its pathway is cofactor biosynthesis; ubiquinone biosynthesis. Its function is as follows. Removes the pyruvyl group from chorismate, with concomitant aromatization of the ring, to provide 4-hydroxybenzoate (4HB) for the ubiquinone pathway. This is Probable chorismate pyruvate-lyase from Psychromonas ingrahamii (strain DSM 17664 / CCUG 51855 / 37).